The following is a 285-amino-acid chain: Undecaprenyl-diphosphatase (285 aa).

Helical transmembrane passes span 12 to 34, 49 to 69, 93 to 113, 120 to 140, 159 to 179, 234 to 254, and 263 to 283; these read IVIAILQGATELFPVSSLGHAVI, IFLPFLVMLHLGTAIALLVYF, IHILALLVVATIPAVIIGGLL, LFGTARYAAIFLFLNGLLLLL, LTYADAAIIGLWQCLAFLPGI, VATIGAMVAAVTALASTAFLM, and WALSPFGYYCVLAGAVSFFIL.

Belongs to the UppP family.

The protein localises to the cell inner membrane. It catalyses the reaction di-trans,octa-cis-undecaprenyl diphosphate + H2O = di-trans,octa-cis-undecaprenyl phosphate + phosphate + H(+). Its function is as follows. Catalyzes the dephosphorylation of undecaprenyl diphosphate (UPP). Confers resistance to bacitracin. The protein is Undecaprenyl-diphosphatase of Gluconacetobacter diazotrophicus (strain ATCC 49037 / DSM 5601 / CCUG 37298 / CIP 103539 / LMG 7603 / PAl5).